The primary structure comprises 108 residues: Cell division protein FtsL (108 aa).

The Cytoplasmic segment spans residues 1–24 (MSKDTASQPSLTKLIGLDIFGVGR). The helical transmembrane segment at 25–45 (LHAILLICIFLSAIGVVLATH) threads the bilayer. Residues 46–108 (NTRQMTVQRE…PDKEVIIKLR (63 aa)) are Periplasmic-facing.

This sequence belongs to the FtsL family. Part of a complex composed of FtsB, FtsL and FtsQ.

The protein localises to the cell inner membrane. Its function is as follows. Essential cell division protein. May link together the upstream cell division proteins, which are predominantly cytoplasmic, with the downstream cell division proteins, which are predominantly periplasmic. The polypeptide is Cell division protein FtsL (Aliivibrio fischeri (strain ATCC 700601 / ES114) (Vibrio fischeri)).